The chain runs to 308 residues: Eukaryotic translation initiation factor 3 subunit G-B (308 aa).

2 disordered regions span residues methionine 1–proline 35 and serine 176–alanine 227. Over residues glycine 185–proline 194 the composition is skewed to low complexity. Residues glycine 209–alanine 227 are compositionally biased toward basic and acidic residues. Residues alanine 227 to proline 305 enclose the RRM domain.

It belongs to the eIF-3 subunit G family. Component of the eukaryotic translation initiation factor 3 (eIF-3) complex, which is composed of 13 subunits: eif3a, eif3b, eif3c, eif3d, eif3e, eif3f, eif3g, eif3h, eif3i, eif3j, eif3k, eif3l and eif3m.

The protein resides in the cytoplasm. RNA-binding component of the eukaryotic translation initiation factor 3 (eIF-3) complex, which is involved in protein synthesis of a specialized repertoire of mRNAs and, together with other initiation factors, stimulates binding of mRNA and methionyl-tRNAi to the 40S ribosome. The eIF-3 complex specifically targets and initiates translation of a subset of mRNAs involved in cell proliferation. This subunit can bind 18S rRNA. This chain is Eukaryotic translation initiation factor 3 subunit G-B (eif3g-b), found in Xenopus laevis (African clawed frog).